Here is a 468-residue protein sequence, read N- to C-terminus: Glutamate--tRNA ligase (468 aa).

The 'HIGH' region signature appears at 12-22 (PSPTGFIHLGN). The 'KMSKS' region motif lies at 244 to 248 (KMSKR). ATP is bound at residue Lys-247.

Belongs to the class-I aminoacyl-tRNA synthetase family. Glutamate--tRNA ligase type 1 subfamily. As to quaternary structure, monomer.

It is found in the cytoplasm. The catalysed reaction is tRNA(Glu) + L-glutamate + ATP = L-glutamyl-tRNA(Glu) + AMP + diphosphate. In terms of biological role, catalyzes the attachment of glutamate to tRNA(Glu) in a two-step reaction: glutamate is first activated by ATP to form Glu-AMP and then transferred to the acceptor end of tRNA(Glu). In Polynucleobacter asymbioticus (strain DSM 18221 / CIP 109841 / QLW-P1DMWA-1) (Polynucleobacter necessarius subsp. asymbioticus), this protein is Glutamate--tRNA ligase.